Here is a 44-residue protein sequence, read N- to C-terminus: Photosystem I reaction center subunit IX (44 aa).

Residues 7-27 (YLSVAPVVSTIWFGALAGLLI) form a helical membrane-spanning segment.

The protein belongs to the PsaJ family.

Its subcellular location is the plastid. It localises to the chloroplast thylakoid membrane. In terms of biological role, may help in the organization of the PsaE and PsaF subunits. This chain is Photosystem I reaction center subunit IX, found in Cucumis sativus (Cucumber).